The primary structure comprises 82 residues: RNA-binding protein BH0128 (82 aa).

It belongs to the eukaryotic ribosomal protein eL8 family.

This chain is RNA-binding protein BH0128, found in Halalkalibacterium halodurans (strain ATCC BAA-125 / DSM 18197 / FERM 7344 / JCM 9153 / C-125) (Bacillus halodurans).